Reading from the N-terminus, the 434-residue chain is 3-ketoacyl-CoA thiolase A, peroxisomal (434 aa).

A peroxisome-targeting transit peptide spans 1–36 (MSESVGRTSAMHRLQVVLGHLAGRPESSSALQAAPC). The PTS2-type peroxisomal targeting signal stretch occupies residues 11–36 (MHRLQVVLGHLAGRPESSSALQAAPC). C133 functions as the Acyl-thioester intermediate in the catalytic mechanism. N6-acetyllysine occurs at positions 183 and 244. Catalysis depends on proton acceptor residues H387 and C418.

This sequence belongs to the thiolase-like superfamily. Thiolase family. As to quaternary structure, homodimer. Interacts (via PTS2-type peroxisomal targeting signal region) with PEX7; leading to its translocation into peroxisomes.

The protein localises to the peroxisome. It carries out the reaction an acyl-CoA + acetyl-CoA = a 3-oxoacyl-CoA + CoA. The catalysed reaction is 2 acetyl-CoA = acetoacetyl-CoA + CoA. It catalyses the reaction tetradecanoyl-CoA + acetyl-CoA = 3-oxohexadecanoyl-CoA + CoA. The enzyme catalyses hexanoyl-CoA + acetyl-CoA = 3-oxooctanoyl-CoA + CoA. It carries out the reaction 3-oxohexadecanedioyl-CoA + CoA = tetradecanedioyl-CoA + acetyl-CoA. The catalysed reaction is 3-oxo-(6Z,9Z,12Z,15Z,18Z,21Z)-tetracosahexaenoyl-CoA + CoA = (4Z,7Z,10Z,13Z,16Z,19Z)-docosahexaenoyl-CoA + acetyl-CoA. It participates in lipid metabolism; peroxisomal fatty acid beta-oxidation. Its function is as follows. Responsible for the thiolytic cleavage of straight chain 3-keto fatty acyl-CoAs (3-oxoacyl-CoAs). Plays an important role in fatty acid peroxisomal beta-oxidation. Catalyzes the cleavage of short, medium, long, and very long straight chain 3-oxoacyl-CoAs. Medium chain straight 3-oxoacyl-CoAs are preferred substrates. This chain is 3-ketoacyl-CoA thiolase A, peroxisomal, found in Rattus norvegicus (Rat).